A 361-amino-acid polypeptide reads, in one-letter code: Chorismate synthase (361 aa).

NADP(+)-binding residues include Arg48 and Arg54. FMN-binding positions include 125–127 (RSS), 238–239 (NA), Gly278, 293–297 (KPTSS), and Arg319.

The protein belongs to the chorismate synthase family. In terms of assembly, homotetramer. The cofactor is FMNH2.

The enzyme catalyses 5-O-(1-carboxyvinyl)-3-phosphoshikimate = chorismate + phosphate. The protein operates within metabolic intermediate biosynthesis; chorismate biosynthesis; chorismate from D-erythrose 4-phosphate and phosphoenolpyruvate: step 7/7. Its function is as follows. Catalyzes the anti-1,4-elimination of the C-3 phosphate and the C-6 proR hydrogen from 5-enolpyruvylshikimate-3-phosphate (EPSP) to yield chorismate, which is the branch point compound that serves as the starting substrate for the three terminal pathways of aromatic amino acid biosynthesis. This reaction introduces a second double bond into the aromatic ring system. The polypeptide is Chorismate synthase (Escherichia coli O7:K1 (strain IAI39 / ExPEC)).